The chain runs to 67 residues: Large ribosomal subunit protein uL29 (67 aa).

The protein belongs to the universal ribosomal protein uL29 family.

In Halorhodospira halophila (strain DSM 244 / SL1) (Ectothiorhodospira halophila (strain DSM 244 / SL1)), this protein is Large ribosomal subunit protein uL29.